The following is a 441-amino-acid chain: Transcriptional regulatory protein ZraR (441 aa).

Residues 7 to 121 (DILVVDDDIS…NLQATLEKAL (115 aa)) form the Response regulatory domain. Residue aspartate 56 is modified to 4-aspartylphosphate. Residues 141–370 (MVGKSPAMQH…LENAVERAVV (230 aa)) enclose the Sigma-54 factor interaction domain. The ATP site is built by glycine 172, threonine 173, arginine 329, and arginine 359. Positions 421–440 (KTEAARQLGITRKTLLAKLS) form a DNA-binding region, H-T-H motif.

Monomer. Post-translationally, phosphorylated by ZraS.

The protein resides in the cytoplasm. With respect to regulation, activity of the ZraS/ZraR two-component system is repressed by the zinc-bound form of ZraP, which probably interacts with the periplasmic region of ZraS. Functionally, part of the Zra signaling pathway, an envelope stress response (ESR) system composed of the periplasmic accessory protein ZraP, the histidine kinase ZraS and the transcriptional regulator ZraR. The ZraPSR system contributes to antibiotic resistance and is important for membrane integrity in the presence of membrane-targeting biocides. ZraR is a member of the two-component regulatory system ZraS/ZraR. When activated by ZraS, acts in conjunction with sigma-54 to regulate the expression of zraP in the presence of high Zn(2+) or Pb(2+) concentrations. Also positively autoregulates the expression of the zraSR operon. Binds to a region within the zraP-zraSR intergenic region that is characterized by two inverted repeats separated by a 14 bp spacer. In addition, controls a regulon of genes of diverse functions that may be critical to maintain envelope integrity and cell survival under stressful conditions. The system has no direct role in zinc or copper resistance. The protein is Transcriptional regulatory protein ZraR of Escherichia coli (strain K12).